The primary structure comprises 146 residues: Hemoglobin subunit beta (146 aa).

One can recognise a Globin domain in the interval phenylalanine 2–histidine 146. Phosphoserine is present on serine 44. Lysine 59 carries the N6-acetyllysine modification. Position 63 (histidine 63) interacts with heme b. An N6-acetyllysine modification is found at lysine 82. Histidine 92 provides a ligand contact to heme b. Cysteine 93 carries the S-nitrosocysteine modification.

This sequence belongs to the globin family. Heterotetramer of two alpha chains and two beta chains. In terms of tissue distribution, red blood cells.

In terms of biological role, involved in oxygen transport from the lung to the various peripheral tissues. The protein is Hemoglobin subunit beta (HBB) of Paguma larvata (Masked palm civet).